A 297-amino-acid polypeptide reads, in one-letter code: Nucleotide-binding protein Bphyt_0592 (297 aa).

ATP is bound at residue 8 to 15 (GISGSGKS). Residue 57–60 (DARS) participates in GTP binding.

The protein belongs to the RapZ-like family.

Displays ATPase and GTPase activities. This Paraburkholderia phytofirmans (strain DSM 17436 / LMG 22146 / PsJN) (Burkholderia phytofirmans) protein is Nucleotide-binding protein Bphyt_0592.